The chain runs to 145 residues: Transcriptional anti-antiactivator ExsC (145 aa).

In terms of assembly, homodimer. Interacts with ExsE. Interacts directly with ExsD to form a heterotetrameric complex.

The protein resides in the cytoplasm. With respect to regulation, in the absence of inducing signals, ExsE interacts with and inhibits ExsC activity. Part of the regulatory cascade that plays a role in the transcriptional regulation of the type III secretion system (T3SS). Interacts with antiactivator ExsD to inhibit its activity leading to ExsA-mediated transcription. The sequence is that of Transcriptional anti-antiactivator ExsC (exsC) from Pseudomonas aeruginosa (strain ATCC 15692 / DSM 22644 / CIP 104116 / JCM 14847 / LMG 12228 / 1C / PRS 101 / PAO1).